A 255-amino-acid polypeptide reads, in one-letter code: Ribonuclease HII (255 aa).

The RNase H type-2 domain occupies 72–255; it reads AIICGIDEVG…KSFEPIKSLL (184 aa). The a divalent metal cation site is built by D78, E79, and D170.

The protein belongs to the RNase HII family. Mn(2+) serves as cofactor. It depends on Mg(2+) as a cofactor.

Its subcellular location is the cytoplasm. It catalyses the reaction Endonucleolytic cleavage to 5'-phosphomonoester.. In terms of biological role, endonuclease that specifically degrades the RNA of RNA-DNA hybrids. This is Ribonuclease HII from Staphylococcus aureus (strain bovine RF122 / ET3-1).